A 242-amino-acid chain; its full sequence is Protein HTATIP2 (242 aa).

Ala2 is modified (N-acetylalanine). Positions Ala2–Gly25 are required for interaction with elongation factor EEF1A1. The NADPH site is built by Ser27, Gly28, Glu29, Thr30, Arg52, Arg53, Leu92, Gly93, Tyr143, Lys147, Leu170, and Arg178. The active-site Proton acceptor is the Tyr143. Residue Lys147 is part of the active site.

As to quaternary structure, monomer. Forms homodimers during oxidative stress. Interacts (via N-terminus) with elongation factor EEF1A1 (via middle-region); the interaction is direct and competes with EEF1A1 binding to guanyl-nucleotide exchange factor EEF1B2, thereby inhibiting GDP for GTP exchange and reactivation of EEF1A1. Interacts with nuclear transport receptors XPO4, IPO5/RANBP5, IPO7, IPO9 and KPNB1 as well as GCN1L1/GCN1 and LRPPRC probably through their HEAT repeats. Binds NCOA5/CIA.

It localises to the cytoplasm. Functionally, represses translation by preventing reactivation of elongation factor eEF1A. May also inhibit nuclear import by competing with nuclear import substrates for binding to a subset of nuclear transport receptors. Has additionally been proposed to act as a redox sensor involved in cellular oxidative stress surveillance. The protein is Protein HTATIP2 of Mus musculus (Mouse).